The sequence spans 357 residues: Tetraacyldisaccharide 4'-kinase (357 aa).

Residue 67–74 participates in ATP binding; the sequence is SVGGTGKT.

The protein belongs to the LpxK family.

It catalyses the reaction a lipid A disaccharide + ATP = a lipid IVA + ADP + H(+). It functions in the pathway glycolipid biosynthesis; lipid IV(A) biosynthesis; lipid IV(A) from (3R)-3-hydroxytetradecanoyl-[acyl-carrier-protein] and UDP-N-acetyl-alpha-D-glucosamine: step 6/6. Transfers the gamma-phosphate of ATP to the 4'-position of a tetraacyldisaccharide 1-phosphate intermediate (termed DS-1-P) to form tetraacyldisaccharide 1,4'-bis-phosphate (lipid IVA). The protein is Tetraacyldisaccharide 4'-kinase of Syntrophotalea carbinolica (strain DSM 2380 / NBRC 103641 / GraBd1) (Pelobacter carbinolicus).